A 238-amino-acid chain; its full sequence is Ribonuclease M (238 aa).

5 disulfides stabilise this stretch: Cys-5/Cys-22, Cys-13/Cys-58, Cys-21/Cys-126, Cys-66/Cys-118, and Cys-191/Cys-225. The active site involves His-51. A glycan (N-linked (GlcNAc...) asparagine) is linked at Asn-74. Residues Glu-111 and His-115 contribute to the active site.

This sequence belongs to the RNase T2 family.

It catalyses the reaction a ribonucleotidyl-ribonucleotide-RNA + H2O = a 3'-end 3'-phospho-ribonucleotide-RNA + a 5'-end dephospho-ribonucleoside-RNA + H(+). Its function is as follows. This is a base non-specific and adenylic acid preferential ribonuclease. The protein is Ribonuclease M of Aspergillus phoenicis (Aspergillus saitoi).